Reading from the N-terminus, the 258-residue chain is Acyl-[acyl-carrier-protein]--UDP-N-acetylglucosamine O-acyltransferase (258 aa).

It belongs to the transferase hexapeptide repeat family. LpxA subfamily. In terms of assembly, homotrimer.

Its subcellular location is the cytoplasm. It catalyses the reaction a (3R)-hydroxyacyl-[ACP] + UDP-N-acetyl-alpha-D-glucosamine = a UDP-3-O-[(3R)-3-hydroxyacyl]-N-acetyl-alpha-D-glucosamine + holo-[ACP]. It functions in the pathway glycolipid biosynthesis; lipid IV(A) biosynthesis; lipid IV(A) from (3R)-3-hydroxytetradecanoyl-[acyl-carrier-protein] and UDP-N-acetyl-alpha-D-glucosamine: step 1/6. Its function is as follows. Involved in the biosynthesis of lipid A, a phosphorylated glycolipid that anchors the lipopolysaccharide to the outer membrane of the cell. This chain is Acyl-[acyl-carrier-protein]--UDP-N-acetylglucosamine O-acyltransferase, found in Thiobacillus denitrificans (strain ATCC 25259 / T1).